Reading from the N-terminus, the 86-residue chain is uncharacterized protein (86 aa).

4Fe-4S ferredoxin-type domains follow at residues 1–29 and 31–65; these read MALL…IGDE and YVID…PDPE. 8 residues coordinate [4Fe-4S] cluster: Cys9, Cys12, Cys15, Cys19, Cys38, Cys41, Cys50, and Cys54.

Requires [4Fe-4S] cluster as cofactor.

This is an uncharacterized protein from Haemophilus influenzae (strain ATCC 51907 / DSM 11121 / KW20 / Rd).